Consider the following 339-residue polypeptide: Glycerol-3-phosphate dehydrogenase [NAD(P)+] (339 aa).

NADPH-binding residues include serine 31, tryptophan 32, arginine 52, and lysine 122. Sn-glycerol 3-phosphate-binding residues include lysine 122 and glycine 152. Alanine 156 lines the NADPH pocket. Sn-glycerol 3-phosphate contacts are provided by lysine 207, aspartate 260, serine 270, arginine 271, and asparagine 272. The active-site Proton acceptor is the lysine 207. Arginine 271 is a binding site for NADPH. An NADPH-binding site is contributed by glutamate 293.

This sequence belongs to the NAD-dependent glycerol-3-phosphate dehydrogenase family.

The protein resides in the cytoplasm. It catalyses the reaction sn-glycerol 3-phosphate + NAD(+) = dihydroxyacetone phosphate + NADH + H(+). The catalysed reaction is sn-glycerol 3-phosphate + NADP(+) = dihydroxyacetone phosphate + NADPH + H(+). It functions in the pathway membrane lipid metabolism; glycerophospholipid metabolism. In terms of biological role, catalyzes the reduction of the glycolytic intermediate dihydroxyacetone phosphate (DHAP) to sn-glycerol 3-phosphate (G3P), the key precursor for phospholipid synthesis. The protein is Glycerol-3-phosphate dehydrogenase [NAD(P)+] of Tropheryma whipplei (strain Twist) (Whipple's bacillus).